A 32-amino-acid polypeptide reads, in one-letter code: Potassium channel toxin alpha-KTx 10.6 (32 aa).

Disulfide bonds link C3–C22, C8–C27, and C12–C29.

In terms of tissue distribution, expressed by the venom gland.

The protein localises to the secreted. Blocks human voltage-gated potassium (Kv) channels Kv1.2/KCNA2 and Kv1.3/KCNA3. Does not block human Kv1.1 at 100nM concentration. This is Potassium channel toxin alpha-KTx 10.6 from Centruroides bonito (Scorpion).